We begin with the raw amino-acid sequence, 446 residues long: Coiled-coil domain-containing protein 112 (446 aa).

2 coiled-coil regions span residues 35 to 116 and 219 to 400; these read KTER…RKID and ERKK…NVSR. Disordered regions lie at residues 253–272 and 390–430; these read FHNK…KKQK and LKEK…LLHI. Basic and acidic residues predominate over residues 255 to 268; that stretch reads NKQEDNQKQKEEQR.

The protein localises to the cytoplasm. Its subcellular location is the cytoskeleton. It localises to the microtubule organizing center. It is found in the centrosome. The protein resides in the centriolar satellite. This Homo sapiens (Human) protein is Coiled-coil domain-containing protein 112 (CCDC112).